Reading from the N-terminus, the 87-residue chain is DNA-directed RNA polymerase subunit omega (87 aa).

This sequence belongs to the RNA polymerase subunit omega family. The RNAP catalytic core consists of 2 alpha, 1 beta, 1 beta' and 1 omega subunit. When a sigma factor is associated with the core the holoenzyme is formed, which can initiate transcription.

It catalyses the reaction RNA(n) + a ribonucleoside 5'-triphosphate = RNA(n+1) + diphosphate. Promotes RNA polymerase assembly. Latches the N- and C-terminal regions of the beta' subunit thereby facilitating its interaction with the beta and alpha subunits. This is DNA-directed RNA polymerase subunit omega from Azotobacter vinelandii (strain DJ / ATCC BAA-1303).